The primary structure comprises 448 residues: DNA repair protein RadA (448 aa).

The segment at 10–27 (CQHCGFTSPKWLGKCVQC) adopts a C4-type zinc-finger fold. 96–103 (GSPGVGKS) is a binding site for ATP. Residues 253 to 257 (KNRFG) carry the RadA KNRFG motif motif. Residues 351–448 (DVFINVSGGI…NVVGKIVEWM (98 aa)) are lon-protease-like.

Belongs to the RecA family. RadA subfamily.

DNA-dependent ATPase involved in processing of recombination intermediates, plays a role in repairing DNA breaks. Stimulates the branch migration of RecA-mediated strand transfer reactions, allowing the 3' invading strand to extend heteroduplex DNA faster. Binds ssDNA in the presence of ADP but not other nucleotides, has ATPase activity that is stimulated by ssDNA and various branched DNA structures, but inhibited by SSB. Does not have RecA's homology-searching function. The sequence is that of DNA repair protein RadA from Helicobacter pylori (strain J99 / ATCC 700824) (Campylobacter pylori J99).